We begin with the raw amino-acid sequence, 374 residues long: MGELGALQSIVYHRGSLRLLDQRKLPLEVDYIDVKCSGDGWNAIRDMVVRGAPAIAIAAALALAVEVSGLEDFTGTPAEAAAFVSEKLEYLVSSRPTAVNLSDAATKLRSLVSRTAETEKDAKAIFQAYIDAAETMLVDDVSDNKAIGSHGAEFLKQKLEVSKDISVLTHCNTGSLATAGYGTALGVIRALHSGGILEKAFCTETRPFNQGSRLTAFELVHDKVPATLIADSAAAALMKSGCIQAVIVGADRIAANGDTANKIGTYNLAISAKHHGVQFYVAAPITSIDLSLPSGEQIVIEERSPNELLNSEGGLGKQVAASGISVWNPAFDVTPANLITAIITEKGVITKSDADETFNIKDFIQSAKLYSTMQ.

D251 serves as the catalytic Proton donor.

The protein belongs to the eIF-2B alpha/beta/delta subunits family. MtnA subfamily.

It localises to the cytoplasm. The protein resides in the nucleus. It carries out the reaction 5-(methylsulfanyl)-alpha-D-ribose 1-phosphate = 5-(methylsulfanyl)-D-ribulose 1-phosphate. It functions in the pathway amino-acid biosynthesis; L-methionine biosynthesis via salvage pathway; L-methionine from S-methyl-5-thio-alpha-D-ribose 1-phosphate: step 1/6. Catalyzes the interconversion of methylthioribose-1-phosphate (MTR-1-P) into methylthioribulose-1-phosphate (MTRu-1-P). The chain is Methylthioribose-1-phosphate isomerase from Oryza sativa subsp. indica (Rice).